Here is a 151-residue protein sequence, read N- to C-terminus: MPRPFQIRKVTRLPKCKSFKPVGVPRKVLEQAILALDEYEAIRLADYLKLEHLEAAEKMGISRPTFTRLIERARTKLASAIIEAKELVIEGGHIDLQSTRLRCSDCGEEQQAEPSESSQNCPECGSENVEDMKLFFTGAKHGRQRRRRGRA.

The protein belongs to the UPF0251 family.

The chain is UPF0251 protein Ctha_0452 from Chloroherpeton thalassium (strain ATCC 35110 / GB-78).